The chain runs to 256 residues: Gluconate 5-dehydrogenase (256 aa).

15 to 39 lines the NADP(+) pocket; it reads LVTGASRGIGLTLAKGLARYGAEVV. Ser147 contributes to the substrate binding site. Tyr160 functions as the Proton acceptor in the catalytic mechanism.

This sequence belongs to the short-chain dehydrogenases/reductases (SDR) family. As to quaternary structure, homodimer.

The protein resides in the cytoplasm. The catalysed reaction is D-gluconate + NADP(+) = 5-dehydro-D-gluconate + NADPH + H(+). Its function is as follows. Catalyzes the reversible NADP-dependent oxidation of gluconate to 5-ketogluconate. Is involved in the non-phosphorylative, ketogenic oxidation of glucose. Is almost inactive with NAD as cosubstrate. Displays high substrate specificity since D-Glucose, D-sorbitol, and D-mannitol are not oxidized by the enzyme, and 2-ketogluconate and L-sorbose are not reduced. Can accept D-fructose as a substrate, with a rate that is only 10% of the rate of 5-ketogluconate reduction. This chain is Gluconate 5-dehydrogenase, found in Gluconobacter oxydans (strain 621H) (Gluconobacter suboxydans).